Here is a 185-residue protein sequence, read N- to C-terminus: Ribosome-recycling factor (185 aa).

This sequence belongs to the RRF family.

The protein resides in the cytoplasm. In terms of biological role, responsible for the release of ribosomes from messenger RNA at the termination of protein biosynthesis. May increase the efficiency of translation by recycling ribosomes from one round of translation to another. In Corynebacterium glutamicum (strain R), this protein is Ribosome-recycling factor.